A 279-amino-acid chain; its full sequence is NAD-dependent protein deacylase (279 aa).

A Deacetylase sirtuin-type domain is found at 20–272 (RERLRQRIFF…PEFVEKLLKG (253 aa)). 48–67 (GAGISAESGIRTFRAADGLW) is a binding site for NAD(+). Residues Tyr92 and Arg95 each contribute to the substrate site. 129-132 (QNID) provides a ligand contact to NAD(+). His147 (proton acceptor) is an active-site residue. Zn(2+) contacts are provided by Cys155 and Cys174. NAD(+) is bound by residues 214–216 (GTS), 240–242 (NLE), and Ala258.

Belongs to the sirtuin family. Class III subfamily. In terms of assembly, forms a 1:1 complex with acetyl-CoA synthetase (Acs). It depends on Zn(2+) as a cofactor.

It localises to the cytoplasm. The catalysed reaction is N(6)-acetyl-L-lysyl-[protein] + NAD(+) + H2O = 2''-O-acetyl-ADP-D-ribose + nicotinamide + L-lysyl-[protein]. It catalyses the reaction N(6)-succinyl-L-lysyl-[protein] + NAD(+) + H2O = 2''-O-succinyl-ADP-D-ribose + nicotinamide + L-lysyl-[protein]. It carries out the reaction N(6)-(2-hydroxyisobutanoyl)-L-lysyl-[protein] + NAD(+) + H2O = 2''-O-(2-hydroxyisobutanoyl)-ADP-D-ribose + nicotinamide + L-lysyl-[protein]. With respect to regulation, deacetylation is inhibited by nicotinamide. Its function is as follows. NAD-dependent lysine deacetylase that specifically removes acetyl groups on target proteins. Also acts as a protein-lysine deacylase by mediating protein desuccinylation and de-2-hydroxyisobutyrylation. Modulates the activities of several proteins which are inactive in their acylated form. Activates the enzyme acetyl-CoA synthetase (acs) by deacetylating 'Lys-609' in the inactive, acetylated form of the enzyme. May also modulate the activity of other propionyl-adenosine monophosphate (AMP)-forming enzymes. The polypeptide is NAD-dependent protein deacylase (Escherichia coli (strain K12)).